Here is a 218-residue protein sequence, read N- to C-terminus: Probable nicotinate-nucleotide adenylyltransferase (218 aa).

It belongs to the NadD family.

It catalyses the reaction nicotinate beta-D-ribonucleotide + ATP + H(+) = deamido-NAD(+) + diphosphate. It functions in the pathway cofactor biosynthesis; NAD(+) biosynthesis; deamido-NAD(+) from nicotinate D-ribonucleotide: step 1/1. Catalyzes the reversible adenylation of nicotinate mononucleotide (NaMN) to nicotinic acid adenine dinucleotide (NaAD). This chain is Probable nicotinate-nucleotide adenylyltransferase, found in Helicobacter hepaticus (strain ATCC 51449 / 3B1).